We begin with the raw amino-acid sequence, 319 residues long: Acetyl esterase (319 aa).

The short motif at 91 to 93 (HGG) is the Involved in the stabilization of the negatively charged intermediate by the formation of the oxyanion hole element. Active-site residues include Ser-165, Asp-262, and His-292.

Belongs to the 'GDXG' lipolytic enzyme family. In terms of assembly, homodimer. Interacts with MalT and MelA.

The protein resides in the cytoplasm. Displays esterase activity towards short chain fatty esters (acyl chain length of up to 8 carbons). Able to hydrolyze triacetylglycerol (triacetin) and tributyrylglycerol (tributyrin), but not trioleylglycerol (triolein) or cholesterol oleate. Negatively regulates MalT activity by antagonizing maltotriose binding. Inhibits MelA galactosidase activity. This is Acetyl esterase from Escherichia coli (strain ATCC 8739 / DSM 1576 / NBRC 3972 / NCIMB 8545 / WDCM 00012 / Crooks).